The chain runs to 421 residues: Type II methyltransferase M.TaqI (421 aa).

Residues 1-18 (MGLPPLLSLPSNSAPRSL) show a composition bias toward low complexity. A disordered region spans residues 1–20 (MGLPPLLSLPSNSAPRSLGR). S-adenosyl-L-methionine is bound by residues threonine 23, 45-48 (EPAC), glutamate 71, aspartate 89, and proline 107.

Belongs to the N(4)/N(6)-methyltransferase family.

It catalyses the reaction a 2'-deoxyadenosine in DNA + S-adenosyl-L-methionine = an N(6)-methyl-2'-deoxyadenosine in DNA + S-adenosyl-L-homocysteine + H(+). Its function is as follows. A gamma subtype methylase that recognizes the double-stranded sequence 5'-TCGA-3', methylates A-4 on both strands and protects the DNA from cleavage by the TaqI endonuclease. This chain is Type II methyltransferase M.TaqI (taqIM), found in Thermus aquaticus.